A 904-amino-acid polypeptide reads, in one-letter code: Pyrimidine pathway regulatory protein 1 (904 aa).

Over residues 1–11 (MKQKKFNSKKS) the composition is skewed to basic residues. The interval 1 to 27 (MKQKKFNSKKSNRTDLSKRGDSPNIGI) is disordered. Residues 12 to 21 (NRTDLSKRGD) show a composition bias toward basic and acidic residues. Cys34, Cys37, Cys44, Cys51, Cys54, and Cys61 together coordinate Zn(2+). Residues 34–61 (CKRCRLKKIKCDQEFPSCKRCAKLEVPC) constitute a DNA-binding region (zn(2)-C6 fungal-type). Residues 883–904 (GNEGESSYDISKGKNSESGGIF) form a disordered region.

As to quaternary structure, binds DNA as a homodimer.

The protein localises to the nucleus. Positive regulator of URA1 and URA3 expression. The protein is Pyrimidine pathway regulatory protein 1 (PPR1) of Saccharomyces cerevisiae (strain ATCC 204508 / S288c) (Baker's yeast).